Here is a 251-residue protein sequence, read N- to C-terminus: 3-deoxy-manno-octulosonate cytidylyltransferase (251 aa).

The protein belongs to the KdsB family.

The protein resides in the cytoplasm. The catalysed reaction is 3-deoxy-alpha-D-manno-oct-2-ulosonate + CTP = CMP-3-deoxy-beta-D-manno-octulosonate + diphosphate. Its pathway is nucleotide-sugar biosynthesis; CMP-3-deoxy-D-manno-octulosonate biosynthesis; CMP-3-deoxy-D-manno-octulosonate from 3-deoxy-D-manno-octulosonate and CTP: step 1/1. It participates in bacterial outer membrane biogenesis; lipopolysaccharide biosynthesis. In terms of biological role, activates KDO (a required 8-carbon sugar) for incorporation into bacterial lipopolysaccharide in Gram-negative bacteria. The polypeptide is 3-deoxy-manno-octulosonate cytidylyltransferase (Vibrio vulnificus (strain CMCP6)).